The sequence spans 985 residues: Regulator of telomere elongation helicase 1 homolog (985 aa).

In terms of domain architecture, Helicase ATP-binding spans 7 to 303 (AGIPVHFPFE…QDMGGDEPKD (297 aa)). Residue 42 to 49 (SPTGTGKT) participates in ATP binding. [4Fe-4S] cluster contacts are provided by cysteine 146, cysteine 164, cysteine 173, and cysteine 209. Residues 252–255 (DEAH) carry the DEAH box motif. Residues 858–884 (GSSGMVKIHKRERSSPTQPESSSQVSK) are disordered. Residues 872–882 (SPTQPESSSQV) are compositionally biased toward polar residues. A Phosphothreonine modification is found at threonine 874.

It belongs to the helicase family. RAD3/XPD subfamily.

The protein localises to the nucleus. The catalysed reaction is ATP + H2O = ADP + phosphate + H(+). Its function is as follows. A probable ATP-dependent DNA helicase implicated in DNA repair and the maintenance of genomic stability. Acts as an anti-recombinase to counteract toxic recombination and limit crossover during meiosis. Regulates meiotic recombination and crossover homeostasis by physically dissociating strand invasion events and thereby promotes noncrossover repair by meiotic synthesis dependent strand annealing (SDSA) as well as disassembly of D loop recombination intermediates. This chain is Regulator of telomere elongation helicase 1 homolog, found in Drosophila yakuba (Fruit fly).